The chain runs to 203 residues: Superoxide dismutase [Mn] (203 aa).

4 residues coordinate Mn(2+): histidine 31, histidine 79, aspartate 161, and histidine 165.

It belongs to the iron/manganese superoxide dismutase family. Mn(2+) is required as a cofactor.

It carries out the reaction 2 superoxide + 2 H(+) = H2O2 + O2. Its function is as follows. Destroys superoxide anion radicals which are normally produced within the cells and which are toxic to biological systems. This is Superoxide dismutase [Mn] (sod) from Haloarcula marismortui (strain ATCC 43049 / DSM 3752 / JCM 8966 / VKM B-1809) (Halobacterium marismortui).